A 132-amino-acid polypeptide reads, in one-letter code: D-ribose pyranase (132 aa).

The active-site Proton donor is the histidine 20. Substrate-binding positions include aspartate 28, histidine 99, and 121-123 (YSN).

Belongs to the RbsD / FucU family. RbsD subfamily. As to quaternary structure, homodecamer.

The protein localises to the cytoplasm. It carries out the reaction beta-D-ribopyranose = beta-D-ribofuranose. Its pathway is carbohydrate metabolism; D-ribose degradation; D-ribose 5-phosphate from beta-D-ribopyranose: step 1/2. Catalyzes the interconversion of beta-pyran and beta-furan forms of D-ribose. The chain is D-ribose pyranase from Pseudomonas putida (strain GB-1).